A 340-amino-acid polypeptide reads, in one-letter code: Uroporphyrinogen decarboxylase (340 aa).

Substrate contacts are provided by residues 21–25 (RQAGR), F40, D71, Y147, S202, and H316.

The protein belongs to the uroporphyrinogen decarboxylase family. Homodimer.

Its subcellular location is the cytoplasm. It catalyses the reaction uroporphyrinogen III + 4 H(+) = coproporphyrinogen III + 4 CO2. The protein operates within porphyrin-containing compound metabolism; protoporphyrin-IX biosynthesis; coproporphyrinogen-III from 5-aminolevulinate: step 4/4. In terms of biological role, catalyzes the decarboxylation of four acetate groups of uroporphyrinogen-III to yield coproporphyrinogen-III. The polypeptide is Uroporphyrinogen decarboxylase (Wolinella succinogenes (strain ATCC 29543 / DSM 1740 / CCUG 13145 / JCM 31913 / LMG 7466 / NCTC 11488 / FDC 602W) (Vibrio succinogenes)).